Consider the following 595-residue polypeptide: Aspartate--tRNA ligase (595 aa).

An L-aspartate-binding site is contributed by glutamate 176. The interval 200 to 203 is aspartate; that stretch reads QIFK. Arginine 222 provides a ligand contact to L-aspartate. Residues 222-224 and glutamine 231 contribute to the ATP site; that span reads RDE. Residue histidine 450 coordinates L-aspartate. Position 484 (glutamate 484) interacts with ATP. Arginine 491 lines the L-aspartate pocket. 536 to 539 is an ATP binding site; sequence GLDR.

Belongs to the class-II aminoacyl-tRNA synthetase family. Type 1 subfamily. Homodimer.

Its subcellular location is the cytoplasm. It carries out the reaction tRNA(Asp) + L-aspartate + ATP = L-aspartyl-tRNA(Asp) + AMP + diphosphate. In terms of biological role, catalyzes the attachment of L-aspartate to tRNA(Asp) in a two-step reaction: L-aspartate is first activated by ATP to form Asp-AMP and then transferred to the acceptor end of tRNA(Asp). This is Aspartate--tRNA ligase from Halalkalibacterium halodurans (strain ATCC BAA-125 / DSM 18197 / FERM 7344 / JCM 9153 / C-125) (Bacillus halodurans).